A 382-amino-acid polypeptide reads, in one-letter code: Mannitol-1-phosphate 5-dehydrogenase (382 aa).

Residue alanine 3–glycine 14 coordinates NAD(+). Lysine 269 is subject to N6-acetyllysine.

Belongs to the mannitol dehydrogenase family.

The enzyme catalyses D-mannitol 1-phosphate + NAD(+) = beta-D-fructose 6-phosphate + NADH + H(+). The chain is Mannitol-1-phosphate 5-dehydrogenase from Escherichia coli O127:H6 (strain E2348/69 / EPEC).